The sequence spans 341 residues: Chorismate synthase (341 aa).

Disordered stretches follow at residues L45 to E64 and H109 to T134. Residue R48 coordinates NADP(+). FMN contacts are provided by residues R128 to S130, G280, K295 to S299, and R308.

Belongs to the chorismate synthase family. As to quaternary structure, homotetramer. Requires FMNH2 as cofactor.

The enzyme catalyses 5-O-(1-carboxyvinyl)-3-phosphoshikimate = chorismate + phosphate. It participates in metabolic intermediate biosynthesis; chorismate biosynthesis; chorismate from D-erythrose 4-phosphate and phosphoenolpyruvate: step 7/7. Its function is as follows. Catalyzes the anti-1,4-elimination of the C-3 phosphate and the C-6 proR hydrogen from 5-enolpyruvylshikimate-3-phosphate (EPSP) to yield chorismate, which is the branch point compound that serves as the starting substrate for the three terminal pathways of aromatic amino acid biosynthesis. This reaction introduces a second double bond into the aromatic ring system. The sequence is that of Chorismate synthase from Bdellovibrio bacteriovorus (strain ATCC 15356 / DSM 50701 / NCIMB 9529 / HD100).